A 910-amino-acid chain; its full sequence is Chitin synthase A (910 aa).

The disordered stretch occupies residues 56-156 (NYHDDYDPRP…EPAPTPTPAP (101 aa)). 2 stretches are compositionally biased toward basic and acidic residues: residues 57–84 (YHDD…HHDA) and 130–148 (DPHD…HDEP). Helical transmembrane passes span 366–386 (WFFQ…IDAG), 448–468 (SAFG…YVAL), 583–603 (VYQT…FLVF), 620–640 (VLFI…FILS), 655–675 (MVYF…FITV), 701–721 (TLII…IIFL), 730–750 (FIQY…YAFC), 828–848 (GVVL…LQAG), and 876–896 (LYSV…FLVV).

Belongs to the chitin synthase family. Class I subfamily.

It localises to the cell membrane. It catalyses the reaction [(1-&gt;4)-N-acetyl-beta-D-glucosaminyl](n) + UDP-N-acetyl-alpha-D-glucosamine = [(1-&gt;4)-N-acetyl-beta-D-glucosaminyl](n+1) + UDP + H(+). Polymerizes chitin, a structural polymer of the cell wall and septum, by transferring the sugar moiety of UDP-GlcNAc to the non-reducing end of the growing chitin polymer. The polypeptide is Chitin synthase A (CHSA) (Ampelomyces quisqualis (Powdery mildew agent)).